Here is a 491-residue protein sequence, read N- to C-terminus: Galactose-1-phosphate uridylyltransferase 1 (491 aa).

It belongs to the galactose-1-phosphate uridylyltransferase type 2 family.

The protein resides in the cytoplasm. It catalyses the reaction alpha-D-galactose 1-phosphate + UDP-alpha-D-glucose = alpha-D-glucose 1-phosphate + UDP-alpha-D-galactose. It participates in carbohydrate metabolism; galactose metabolism. This chain is Galactose-1-phosphate uridylyltransferase 1 (galT1), found in Streptococcus pneumoniae serotype 4 (strain ATCC BAA-334 / TIGR4).